The sequence spans 329 residues: Beta-ribofuranosylphenol 5'-phosphate synthase (329 aa).

It belongs to the beta-RFA-P synthase family. Homodimer. Mg(2+) serves as cofactor.

It carries out the reaction 5-phospho-alpha-D-ribose 1-diphosphate + 4-hydroxybenzoate + H(+) = 4-(beta-D-ribofuranosyl)phenol 5'-phosphate + CO2 + diphosphate. The enzyme catalyses 4-aminobenzoate + 5-phospho-alpha-D-ribose 1-diphosphate + H(+) = 4-(beta-D-ribofuranosyl)aminobenzene 5'-phosphate + CO2 + diphosphate. It functions in the pathway cofactor biosynthesis; 5,6,7,8-tetrahydromethanopterin biosynthesis. Functionally, catalyzes the condensation of 4-hydroxybenzoate (HB) with 5-phospho-alpha-D-ribose 1-diphosphate (PRPP) to produce beta-ribofuranosylphenol 5'-phosphate (beta-RFH-P). Also catalyzes the condensation of 4-aminobenzoate (pABA) with PRPP to produce beta-ribofuranosylaminobenzene 5'-phosphate (beta-RFA-P). Only 4-hydroxybenzoate is known to be biosynthesized by methanogenic archaea, but 4-aminobenzoate can be used as substrate by growing methanogens when it is present in the growth medium. In Methanothermobacter thermautotrophicus (strain ATCC 29096 / DSM 1053 / JCM 10044 / NBRC 100330 / Delta H) (Methanobacterium thermoautotrophicum), this protein is Beta-ribofuranosylphenol 5'-phosphate synthase.